The chain runs to 117 residues: Immunoglobulin heavy variable 3-21 (117 aa).

Residues 1 to 19 form the signal peptide; that stretch reads MELGLRWVFLVAILEGVQC. A framework-1 region spans residues 20 to 44; that stretch reads EVQLVESGGGLVKPGGSLRLSCAAS. The region spanning 20 to 117 is the Ig-like domain; it reads EVQLVESGGG…EDTAVYYCAR (98 aa). Cysteine 41 and cysteine 115 are oxidised to a cystine. Residues 45-52 are complementarity-determining-1; that stretch reads GFTFSSYS. Residues 53-69 are framework-2; the sequence is MNWVRQAPGKGLEWVSS. The interval 70 to 77 is complementarity-determining-2; sequence ISSSSSYI. A framework-3 region spans residues 78–115; the sequence is YYADSVKGRFTISRDNAKNSLYLQMNSLRAEDTAVYYC. The segment at 116–117 is complementarity-determining-3; the sequence is AR.

In terms of assembly, immunoglobulins are composed of two identical heavy chains and two identical light chains; disulfide-linked.

It localises to the secreted. The protein localises to the cell membrane. V region of the variable domain of immunoglobulin heavy chains that participates in the antigen recognition. Immunoglobulins, also known as antibodies, are membrane-bound or secreted glycoproteins produced by B lymphocytes. In the recognition phase of humoral immunity, the membrane-bound immunoglobulins serve as receptors which, upon binding of a specific antigen, trigger the clonal expansion and differentiation of B lymphocytes into immunoglobulins-secreting plasma cells. Secreted immunoglobulins mediate the effector phase of humoral immunity, which results in the elimination of bound antigens. The antigen binding site is formed by the variable domain of one heavy chain, together with that of its associated light chain. Thus, each immunoglobulin has two antigen binding sites with remarkable affinity for a particular antigen. The variable domains are assembled by a process called V-(D)-J rearrangement and can then be subjected to somatic hypermutations which, after exposure to antigen and selection, allow affinity maturation for a particular antigen. This chain is Immunoglobulin heavy variable 3-21, found in Homo sapiens (Human).